A 115-amino-acid chain; its full sequence is Large ribosomal subunit protein P2x (115 aa).

Residues G78–D115 are disordered. Residues A91–E103 show a composition bias toward basic and acidic residues. A phosphoserine mark is found at S104 and S105.

It belongs to the eukaryotic ribosomal protein P1/P2 family. As to quaternary structure, P1 and P2 exist as dimers at the large ribosomal subunit.

Functionally, plays an important role in the elongation step of protein synthesis. This is Large ribosomal subunit protein P2x (RPP2C) from Arabidopsis thaliana (Mouse-ear cress).